A 193-amino-acid chain; its full sequence is Apoptosis-associated speck-like protein containing a CARD (193 aa).

Positions 1-91 (MGRARDAILD…AEQLQTTKEE (91 aa)) constitute a Pyrin domain. Residues lysine 55 and lysine 172 each participate in a glycyl lysine isopeptide (Lys-Gly) (interchain with G-Cter in ubiquitin) cross-link. The CARD domain occupies 105–193 (STARTGHFVD…PYLVMDLEQS (89 aa)). Serine 193 is subject to Phosphoserine.

As to quaternary structure, self-associates; enforced oligomerization induces apoptosis, NF-kappa-B regulation and interleukin-1 beta secretion. Homooligomers can form disk-like particles of approximately 12 nm diameter and approximately 1 nm height. Component of several inflammasomes containing one pattern recognition receptor/sensor, such as NLRP2, NLRP3, NLRP6, NLRC4, AIM2, MEFV or NOD2, and probably NLRC4 or NLRP12. Major component of the ASC pyroptosome, a 1-2 um supramolecular assembly (one per macrophage cell) which consists of oligomerized PYCARD dimers and CASP1. Interacts with CASP1 (precursor form); the interaction induces activation of CASP1 leading to the processing of interleukin-1 beta; PYCARD competes with RIPK2 for binding to CASP1. Interacts with NLRP3; the interaction requires the homooligomerization of NLRP3. Interacts with NLRP2, NLRC4, MEFV, CARD16, AIM2, NOD2, RIGI, RIPK2, PYDC1, PYDC2, NLRP10, CHUK, IKBKB and BAX. Interacts with CASP8. Component of the AIM2 PANoptosome complex, a multiprotein complex that drives inflammatory cell death (PANoptosis). In terms of processing, phosphorylated. Post-translationally, 'Lys-63'-linked polyubiquitination by TRAF3 is critical for speck formation and inflammasome activation. 'Lys-63'-linked deubiquitinated by USP50; a crucial step for NLRP3-mediated inflammasome activation. 'Lys-63'-linked polyubiquitination by PELI1 is also critical for speck formation and inflammasome activation. Deubiquitinated by USP3 that cleaves 'Lys-48'-linked ubiquitin chains and strengthens its stability by blocking proteasomal degradation. Expressed in small intestine, colon, thymus, spleen, brain, heart, skeletal muscle, kidney, lung and liver.

Its subcellular location is the cytoplasm. The protein localises to the inflammasome. It is found in the endoplasmic reticulum. It localises to the mitochondrion. The protein resides in the nucleus. In terms of biological role, functions as a key mediator in apoptosis and inflammation. Promotes caspase-mediated apoptosis involving predominantly caspase-8 and also caspase-9 in a probable cell type-specific manner. Involved in activation of the mitochondrial apoptotic pathway, promotes caspase-8-dependent proteolytic maturation of BID independently of FADD in certain cell types and also mediates mitochondrial translocation of BAX and activates BAX-dependent apoptosis coupled to activation of caspase-9, -2 and -3. Involved in innate immune response by acting as an integral adapter in the assembly of various inflammasomes (NLRP2, NLRP3, NLRP6 and AIM2) which recruit and activate caspase-1 leading to processing and secretion of pro-inflammatory cytokines. Caspase-1-dependent inflammation leads to macrophage pyroptosis, a form of cell death. The function as activating adapter in different types of inflammasomes is mediated by the pyrin and CARD domains and their homotypic interactions. Clustered PYCARD nucleates the formation of caspase-1 filaments through the interaction of their respective CARD domains, acting as a platform for of caspase-1 polymerization. In the NLRC4 inflammasomes seems not be required but facilitates the processing of procaspase-1. In cooperation with NOD2 involved in an inflammasome activated by bacterial muramyl dipeptide leading to caspase-1 activation. May be involved in RIGI-triggered pro-inflammatory responses and inflammasome activation. In collaboration with AIM2 which detects cytosolic double-stranded DNA may also be involved in a caspase-1-independent cell death that involves caspase-8. In adaptive immunity may be involved in maturation of dendritic cells to stimulate T-cell immunity and in cytoskeletal rearrangements coupled to chemotaxis and antigen uptake may be involved in post-transcriptional regulation of the guanine nucleotide exchange factor DOCK2; the latter function is proposed to involve the nuclear form. Also involved in transcriptional activation of cytokines and chemokines independent of the inflammasome; this function may involve AP-1, NF-kappa-B, MAPK and caspase-8 signaling pathways. For regulation of NF-kappa-B activating and inhibiting functions have been reported. Modulates NF-kappa-B induction at the level of the IKK complex by inhibiting kinase activity of CHUK and IKBK. Proposed to compete with RIPK2 for association with CASP1 thereby down-regulating CASP1-mediated RIPK2-dependent NF-kappa-B activation and activating interleukin-1 beta processing. Modulates host resistance to DNA virus infection, probably by inducing the cleavage of and inactivating CGAS in presence of cytoplasmic double-stranded DNA. This chain is Apoptosis-associated speck-like protein containing a CARD (Pycard), found in Mus musculus (Mouse).